Reading from the N-terminus, the 62-residue chain is Photosystem II reaction center protein Z (62 aa).

2 consecutive transmembrane segments (helical) span residues 8-28 (LVLL…VVLA) and 41-61 (YTGA…NSLV).

Belongs to the PsbZ family. In terms of assembly, PSII is composed of 1 copy each of membrane proteins PsbA, PsbB, PsbC, PsbD, PsbE, PsbF, PsbH, PsbI, PsbJ, PsbK, PsbL, PsbM, PsbT, PsbX, PsbY, PsbZ, Psb30/Ycf12, at least 3 peripheral proteins of the oxygen-evolving complex and a large number of cofactors. It forms dimeric complexes.

It is found in the plastid. The protein resides in the chloroplast thylakoid membrane. In terms of biological role, may control the interaction of photosystem II (PSII) cores with the light-harvesting antenna, regulates electron flow through the 2 photosystem reaction centers. PSII is a light-driven water plastoquinone oxidoreductase, using light energy to abstract electrons from H(2)O, generating a proton gradient subsequently used for ATP formation. The protein is Photosystem II reaction center protein Z of Pyropia yezoensis (Susabi-nori).